We begin with the raw amino-acid sequence, 249 residues long: Probable septum site-determining protein MinC (249 aa).

Positions 115–141 (KPAQEAPAQAEPEAAAAPEPANEPAPA) are disordered. A compositionally biased stretch (low complexity) spans 118–141 (QEAPAQAEPEAAAAPEPANEPAPA).

The protein belongs to the MinC family. In terms of assembly, interacts with MinD and FtsZ.

Functionally, cell division inhibitor that blocks the formation of polar Z ring septums. Rapidly oscillates between the poles of the cell to destabilize FtsZ filaments that have formed before they mature into polar Z rings. Prevents FtsZ polymerization. In Marinobacter nauticus (strain ATCC 700491 / DSM 11845 / VT8) (Marinobacter aquaeolei), this protein is Probable septum site-determining protein MinC.